Consider the following 581-residue polypeptide: Arginine--tRNA ligase (581 aa).

Residues 126-136 (PNLAKEMHVGH) carry the 'HIGH' region motif.

This sequence belongs to the class-I aminoacyl-tRNA synthetase family. In terms of assembly, monomer.

It localises to the cytoplasm. It carries out the reaction tRNA(Arg) + L-arginine + ATP = L-arginyl-tRNA(Arg) + AMP + diphosphate. The sequence is that of Arginine--tRNA ligase from Shewanella baltica (strain OS223).